Consider the following 71-residue polypeptide: Small ribosomal subunit protein bS21 (71 aa).

This sequence belongs to the bacterial ribosomal protein bS21 family.

The chain is Small ribosomal subunit protein bS21 from Nitrosococcus oceani (strain ATCC 19707 / BCRC 17464 / JCM 30415 / NCIMB 11848 / C-107).